We begin with the raw amino-acid sequence, 185 residues long: NEDD8-conjugating enzyme UBE2F (185 aa).

The interval M1–R29 is disordered. Residues M1–R29 are interaction with uba3. The 154-residue stretch at V32–R185 folds into the UBC core domain. C116 acts as the Glycyl thioester intermediate in catalysis.

It belongs to the ubiquitin-conjugating enzyme family. UBE2F subfamily.

It carries out the reaction [E1 NEDD8-activating enzyme]-S-[NEDD8 protein]-yl-L-cysteine + [E2 NEDD8-conjugating enzyme]-L-cysteine = [E1 NEDD8-activating enzyme]-L-cysteine + [E2 NEDD8-conjugating enzyme]-S-[NEDD8-protein]-yl-L-cysteine.. It participates in protein modification; protein neddylation. Accepts the ubiquitin-like protein NEDD8 from the UBA3-NAE1 E1 complex and catalyzes its covalent attachment to other proteins. Together with the E3 ubiquitin ligase rnf7/rbx2, specifically neddylates cullin-5 (cul5). Does not neddylate cul1, cul2, cul3, cul4a or cul4b. This Xenopus tropicalis (Western clawed frog) protein is NEDD8-conjugating enzyme UBE2F (ube2f).